Here is a 324-residue protein sequence, read N- to C-terminus: Beta-ketoacyl-[acyl-carrier-protein] synthase III (324 aa).

Residues Cys-112 and His-250 contribute to the active site. Positions 251-255 (QANIR) are ACP-binding. Asn-280 is a catalytic residue.

It belongs to the thiolase-like superfamily. FabH family. Homodimer.

It localises to the cytoplasm. The catalysed reaction is malonyl-[ACP] + acetyl-CoA + H(+) = 3-oxobutanoyl-[ACP] + CO2 + CoA. It functions in the pathway lipid metabolism; fatty acid biosynthesis. In terms of biological role, catalyzes the condensation reaction of fatty acid synthesis by the addition to an acyl acceptor of two carbons from malonyl-ACP. Catalyzes the first condensation reaction which initiates fatty acid synthesis and may therefore play a role in governing the total rate of fatty acid production. Possesses both acetoacetyl-ACP synthase and acetyl transacylase activities. Its substrate specificity determines the biosynthesis of branched-chain and/or straight-chain of fatty acids. The protein is Beta-ketoacyl-[acyl-carrier-protein] synthase III of Clostridium novyi (strain NT).